The chain runs to 122 residues: Large ribosomal subunit protein uL14 (122 aa).

It belongs to the universal ribosomal protein uL14 family. As to quaternary structure, part of the 50S ribosomal subunit. Forms a cluster with proteins L3 and L19. In the 70S ribosome, L14 and L19 interact and together make contacts with the 16S rRNA in bridges B5 and B8.

Binds to 23S rRNA. Forms part of two intersubunit bridges in the 70S ribosome. The polypeptide is Large ribosomal subunit protein uL14 (Mycoplasma capricolum subsp. capricolum (strain California kid / ATCC 27343 / NCTC 10154)).